Reading from the N-terminus, the 158-residue chain is 3-hydroxyacyl-[acyl-carrier-protein] dehydratase FabZ (158 aa).

Residue H57 is part of the active site.

Belongs to the thioester dehydratase family. FabZ subfamily.

It is found in the cytoplasm. It catalyses the reaction a (3R)-hydroxyacyl-[ACP] = a (2E)-enoyl-[ACP] + H2O. Its function is as follows. Involved in unsaturated fatty acids biosynthesis. Catalyzes the dehydration of short chain beta-hydroxyacyl-ACPs and long chain saturated and unsaturated beta-hydroxyacyl-ACPs. The chain is 3-hydroxyacyl-[acyl-carrier-protein] dehydratase FabZ from Anaeromyxobacter sp. (strain Fw109-5).